The following is a 693-amino-acid chain: Polyribonucleotide nucleotidyltransferase (693 aa).

The Mg(2+) site is built by Asp490 and Asp496. Residues 557 to 617 enclose the KH domain; the sequence is PRISWFFIDP…EKVQEAVEYI (61 aa). In terms of domain architecture, S1 motif spans 627 to 691; it reads GDLYTGKVTR…DAGRLQFRRL (65 aa).

Belongs to the polyribonucleotide nucleotidyltransferase family. It depends on Mg(2+) as a cofactor.

The protein resides in the cytoplasm. The enzyme catalyses RNA(n+1) + phosphate = RNA(n) + a ribonucleoside 5'-diphosphate. Involved in mRNA degradation. Catalyzes the phosphorolysis of single-stranded polyribonucleotides processively in the 3'- to 5'-direction. The chain is Polyribonucleotide nucleotidyltransferase from Fervidobacterium nodosum (strain ATCC 35602 / DSM 5306 / Rt17-B1).